A 117-amino-acid chain; its full sequence is Large ribosomal subunit protein bL20c (117 aa).

It belongs to the bacterial ribosomal protein bL20 family.

Its subcellular location is the plastid. It localises to the chloroplast. Functionally, binds directly to 23S ribosomal RNA and is necessary for the in vitro assembly process of the 50S ribosomal subunit. It is not involved in the protein synthesizing functions of that subunit. In Citrus sinensis (Sweet orange), this protein is Large ribosomal subunit protein bL20c.